We begin with the raw amino-acid sequence, 388 residues long: UTP--glucose-1-phosphate uridylyltransferase (388 aa).

Residue Asp-118 participates in Mg(2+) binding.

The protein belongs to the CugP-type UDP-glucose pyrophosphorylase family. Requires Mg(2+) as cofactor.

It catalyses the reaction alpha-D-glucose 1-phosphate + UTP + H(+) = UDP-alpha-D-glucose + diphosphate. Its function is as follows. Catalyzes the formation of UDP-glucose, from UTP and glucose 1-phosphate. Is highly specific since it cannot use other NTPs such as dTTP, CTP, ATP, and GTP, and other sugar-1P such as GlcNAc-1P, Gal-1P, and Man-1P, as substrates. Has probably a central and essential role as the substrate supplier for galactolipid synthesis; galactolipids are major constituents of the photosynthetic thylakoid membrane and important for photosynthetic activity. This Synechocystis sp. (strain ATCC 27184 / PCC 6803 / Kazusa) protein is UTP--glucose-1-phosphate uridylyltransferase.